The sequence spans 332 residues: DNA-directed RNA polymerase subunit alpha (332 aa).

The tract at residues 1 to 227 (MKKFAETPFL…VMYSQMSVFN (227 aa)) is alpha N-terminal domain (alpha-NTD). The tract at residues 248 to 332 (KELVIRIDDL…LRRKLEQLKA (85 aa)) is alpha C-terminal domain (alpha-CTD).

This sequence belongs to the RNA polymerase alpha chain family. Homodimer. The RNAP catalytic core consists of 2 alpha, 1 beta, 1 beta' and 1 omega subunit. When a sigma factor is associated with the core the holoenzyme is formed, which can initiate transcription.

The enzyme catalyses RNA(n) + a ribonucleoside 5'-triphosphate = RNA(n+1) + diphosphate. Its function is as follows. DNA-dependent RNA polymerase catalyzes the transcription of DNA into RNA using the four ribonucleoside triphosphates as substrates. In Aliarcobacter butzleri (strain RM4018) (Arcobacter butzleri), this protein is DNA-directed RNA polymerase subunit alpha.